Reading from the N-terminus, the 103-residue chain is Co-chaperonin GroES (103 aa).

This sequence belongs to the GroES chaperonin family. As to quaternary structure, heptamer of 7 subunits arranged in a ring. Interacts with the chaperonin GroEL.

Its subcellular location is the cytoplasm. Its function is as follows. Together with the chaperonin GroEL, plays an essential role in assisting protein folding. The GroEL-GroES system forms a nano-cage that allows encapsulation of the non-native substrate proteins and provides a physical environment optimized to promote and accelerate protein folding. GroES binds to the apical surface of the GroEL ring, thereby capping the opening of the GroEL channel. The sequence is that of Co-chaperonin GroES from Synechococcus sp. (strain WH7803).